The chain runs to 419 residues: Protein farnesyltransferase subunit beta (419 aa).

PFTB repeat units follow at residues 68-109 (EDNT…ITLG), 119-160 (RNKL…SVLN), 167-208 (IKNV…ILIG), 215-256 (LPRL…ALLQ), and 329-371 (SIAL…SLCQ). (2E,6E)-farnesyl diphosphate is bound by residues 193–196 (HGGY) and 235–238 (RTNK). Asp-241 and Cys-243 together coordinate Zn(2+). Position 244–247 (244–247 (YSFW)) interacts with (2E,6E)-farnesyl diphosphate. His-359 contributes to the Zn(2+) binding site.

This sequence belongs to the protein prenyltransferase subunit beta family. Heterodimer of FTA and FTB. Zn(2+) is required as a cofactor.

The catalysed reaction is L-cysteinyl-[protein] + (2E,6E)-farnesyl diphosphate = S-(2E,6E)-farnesyl-L-cysteinyl-[protein] + diphosphate. In terms of biological role, catalyzes the transfer of a farnesyl moiety from farnesyl diphosphate to a cysteine at the fourth position from the C-terminus of several proteins. The beta subunit FTB is responsible for peptide-binding. The chain is Protein farnesyltransferase subunit beta (FTB) from Pisum sativum (Garden pea).